A 65-amino-acid polypeptide reads, in one-letter code: Conotoxin VnMLCL-031 (65 aa).

An N-terminal signal peptide occupies residues 1–19 (MLCLPXFIILLLLASPAAP). A propeptide spanning residues 20-43 (NPLQTRXQSNLIRAGPEDANIKTX) is cleaved from the precursor. An Isoleucine amide modification is found at Ile-64.

This sequence belongs to the conotoxin T superfamily. In terms of tissue distribution, expressed by the venom duct.

Its subcellular location is the secreted. In Conus ventricosus (Mediterranean cone), this protein is Conotoxin VnMLCL-031.